We begin with the raw amino-acid sequence, 553 residues long: Serine protease 53 (553 aa).

An N-terminal signal peptide occupies residues 1-23 (MKWCWGPVLLIAGATVLMEGLQA). Peptidase S1 domains are found at residues 24-273 (AQRA…ARVQ) and 294-526 (VACG…SLDW). Positions 27-46 (ACGQRGPGPPKPQEGNTVPG) are disordered. The cysteines at positions 62 and 78 are disulfide-linked. Catalysis depends on charge relay system residues H77 and D128. 4 disulfide bridges follow: C158–C230, C187–C209, C220–C249, and C326–C342. Active-site charge relay system residues include S224, H341, and D382. Disulfide bonds link C444–C464 and C474–C502. The active-site Charge relay system is S478.

It belongs to the peptidase S1 family. Predominantly detected in testis, liver, heart and ovary, as well as in several tumor cell lines.

The protein localises to the secreted. Its function is as follows. In vitro can degrade the fibrinogen alpha chain of as well as pro-urokinase-type plasminogen activator. The protein is Serine protease 53 (PRSS53) of Homo sapiens (Human).